Consider the following 624-residue polypeptide: tRNA uridine 5-carboxymethylaminomethyl modification enzyme MnmG (624 aa).

Residues 13-18 (GGGHAG), valine 125, and serine 180 contribute to the FAD site. 273–287 (GPRYCPSIEDKIVRF) provides a ligand contact to NAD(+). Residue glutamine 370 coordinates FAD.

It belongs to the MnmG family. As to quaternary structure, homodimer. Heterotetramer of two MnmE and two MnmG subunits. FAD is required as a cofactor.

The protein localises to the cytoplasm. NAD-binding protein involved in the addition of a carboxymethylaminomethyl (cmnm) group at the wobble position (U34) of certain tRNAs, forming tRNA-cmnm(5)s(2)U34. This Legionella pneumophila (strain Paris) protein is tRNA uridine 5-carboxymethylaminomethyl modification enzyme MnmG.